We begin with the raw amino-acid sequence, 261 residues long: DNA repair protein RecO (261 aa).

Belongs to the RecO family.

Its function is as follows. Involved in DNA repair and RecF pathway recombination. The polypeptide is DNA repair protein RecO (Pelodictyon phaeoclathratiforme (strain DSM 5477 / BU-1)).